A 186-amino-acid chain; its full sequence is Ribosome-recycling factor (186 aa).

This sequence belongs to the RRF family.

Its subcellular location is the cytoplasm. Responsible for the release of ribosomes from messenger RNA at the termination of protein biosynthesis. May increase the efficiency of translation by recycling ribosomes from one round of translation to another. The polypeptide is Ribosome-recycling factor (Rubrobacter xylanophilus (strain DSM 9941 / JCM 11954 / NBRC 16129 / PRD-1)).